Reading from the N-terminus, the 956-residue chain is Plasma membrane ATPase 1 (956 aa).

Topologically, residues 1–65 (MAEKPEVLDA…EKKESKFLKF (65 aa)) are cytoplasmic. Residues 66–85 (LGFMWNPLSWVMEAAAIMAI) traverse the membrane as a helical segment. Residues 86–97 (ALANGGGKPPDW) lie on the Extracellular side of the membrane. The chain crosses the membrane as a helical span at residues 98-118 (QDFVGIITLLIINSTISFIEE). Topologically, residues 119–247 (NNAGNAAAAL…GHFQKVLTAI (129 aa)) are cytoplasmic. A helical transmembrane segment spans residues 248–268 (GNFCICSIAVGMIIEIIVMYP). Topologically, residues 269-277 (IQHRKYRPG) are extracellular. Residues 278–295 (IDNLLVLLIGGIPIAMPT) form a helical membrane-spanning segment. Over 296-646 (VLSVTMAIGS…LTSRAIFQRM (351 aa)) the chain is Cytoplasmic. Catalysis depends on D333, which acts as the 4-aspartylphosphate intermediate. D592 and D596 together coordinate Mg(2+). The chain crosses the membrane as a helical span at residues 647 to 666 (KNYTIYAVSITIRIVLGFML). The Extracellular portion of the chain corresponds to 667–674 (LALIWKFD). A helical membrane pass occupies residues 675–697 (FPPFMVLIIAILNDGTIMTISKD). The Cytoplasmic segment spans residues 698-713 (RVKPSPLPDSWKLAEI). A helical transmembrane segment spans residues 714 to 734 (FTTGVVLGGYLAMMTVIFFWA). Topologically, residues 735–759 (AYKTNFFPRIFGVSTLEKTATDDFR) are extracellular. A helical membrane pass occupies residues 760-780 (KLASAIYLQVSTISQALIFVT). Residues 781 to 792 (RSRSWSFVERPG) lie on the Cytoplasmic side of the membrane. A helical membrane pass occupies residues 793–813 (LLLVFAFFVAQLVATLIAVYA). The Extracellular segment spans residues 814-821 (NWSFAAIE). The helical transmembrane segment at 822–842 (GIGWGWAGVIWLYNIVTYIPL) threads the bilayer. Over 843–956 (DLIKFLIRYA…IETIQQSYTV (114 aa)) the chain is Cytoplasmic.

It belongs to the cation transport ATPase (P-type) (TC 3.A.3) family. Type IIIA subfamily. As to quaternary structure, possibly exists as a homodimer or a homotrimer.

The protein resides in the cell membrane. It carries out the reaction ATP + H2O + H(+)(in) = ADP + phosphate + 2 H(+)(out). In terms of biological role, the plasma membrane ATPase of plants and fungi is a hydrogen ion pump. The proton gradient it generates drives the active transport of nutrients by H(+)-symport. The resulting external acidification and/or internal alkinization may mediate growth responses. This is Plasma membrane ATPase 1 (LHA1) from Solanum lycopersicum (Tomato).